A 388-amino-acid chain; its full sequence is Succinate--CoA ligase [ADP-forming] subunit beta (388 aa).

The 236-residue stretch at 9 to 244 (KQLFARYGLP…QSQEDPREAQ (236 aa)) folds into the ATP-grasp domain. Residues lysine 46, 53–55 (GRG), glutamate 99, threonine 102, and glutamate 107 each bind ATP. The Mg(2+) site is built by asparagine 199 and aspartate 213. Residues asparagine 264 and 321 to 323 (GIV) each bind substrate.

The protein belongs to the succinate/malate CoA ligase beta subunit family. Heterotetramer of two alpha and two beta subunits. The cofactor is Mg(2+).

It carries out the reaction succinate + ATP + CoA = succinyl-CoA + ADP + phosphate. The enzyme catalyses GTP + succinate + CoA = succinyl-CoA + GDP + phosphate. It functions in the pathway carbohydrate metabolism; tricarboxylic acid cycle; succinate from succinyl-CoA (ligase route): step 1/1. Functionally, succinyl-CoA synthetase functions in the citric acid cycle (TCA), coupling the hydrolysis of succinyl-CoA to the synthesis of either ATP or GTP and thus represents the only step of substrate-level phosphorylation in the TCA. The beta subunit provides nucleotide specificity of the enzyme and binds the substrate succinate, while the binding sites for coenzyme A and phosphate are found in the alpha subunit. The chain is Succinate--CoA ligase [ADP-forming] subunit beta from Salmonella arizonae (strain ATCC BAA-731 / CDC346-86 / RSK2980).